A 663-amino-acid chain; its full sequence is tRNA (guanine(26)-N(2))-dimethyltransferase (663 aa).

The transit peptide at 1-16 (MSLARTILWLSRPLRP) directs the protein to the mitochondrion. The region spanning 56-498 (ATVTEGAAKI…APPEALWDIM (443 aa)) is the Trm1 methyltransferase domain. Arginine 83 lines the S-adenosyl-L-methionine pocket. Serine 121 bears the Phosphoserine mark. Residues arginine 165 and aspartate 183 each coordinate S-adenosyl-L-methionine. Zn(2+) is bound by residues cysteine 347, cysteine 350, cysteine 383, and cysteine 386. Phosphoserine is present on serine 516. The tract at residues 534-574 (IREDANPSSRQRGLKRFQANPEANWGPRPRARPGGKAASED) is disordered. Residues 540–572 (PSSRQRGLKRFQANPEANWGPRPRARPGGKAAS) carry the Nuclear localization signal motif. The C3H1-type zinc-finger motif lies at 599–626 (RLKTFPCKRFKEGTCQLGDQCCYSHSPA). At serine 624 the chain carries Phosphoserine. Positions 632–663 (GDIPIEECPETTTKISPGPKAAAGGIPGPGVD) are disordered.

Belongs to the class I-like SAM-binding methyltransferase superfamily. Trm1 family.

The protein localises to the mitochondrion. It localises to the nucleus. It is found in the cytoplasm. The enzyme catalyses guanosine(26) in tRNA + 2 S-adenosyl-L-methionine = N(2)-dimethylguanosine(26) in tRNA + 2 S-adenosyl-L-homocysteine + 2 H(+). Its function is as follows. Dimethylates a single guanine residue at position 26 of most nuclear- and mitochondrial-encoded tRNAs using S-adenosyl-L-methionine as donor of the methyl groups. tRNA guanine(26)-dimethylation is required for redox homeostasis and ensure proper cellular proliferation and oxidative stress survival. In Mus musculus (Mouse), this protein is tRNA (guanine(26)-N(2))-dimethyltransferase.